Reading from the N-terminus, the 914-residue chain is MFPVFSGCFQELQEKNKSLELVSFEEVAVHFTWEEWQDLDDAQRTLYRDVMLETYSSLVSLGHYITKPEMIFKLEQGAEPWIVEETPNLRLSAVQIIDDLIERSHESHDRFFWQIVITNSNTSTQERVELGKTFNLNSNHVLNLIINNGNSSGMKPGQFNDCQNMLFPIKPGETQSGEKPHVCDITRRSHRHHEHLTQHHKIQTLLQTFQCNEQGKTFNTEAMFFIHKRVHIVQTFGKYNEYEKACNNSAVIVQVITQVGQPTCCRKSDFTKHQQTHTGEKPYECVECEKPSISKSDLMLQCKMPTEEKPYACNWCEKLFSYKSSLIIHQRIHTGEKPYGCNECGKTFRRKSFLTLHERTHTGDKPYKCIECGKTFHCKSLLTLHHRTHSGEKPYQCSECGKTFSQKSYLTIHHRTHTGEKPYACDHCEEAFSHKSRLTVHQRTHTGEKPYECNECGKPFINKSNLRLHQRTHTGEKPYECNECGKTFHRKSFLTIHQWTHTGEKPYECNECGKTFRCKSFLTVHQRTHAGEKPYACNECGKTYSHKSYLTVHHRTHTGEKPYECNECGKSFHCKSFLTIHQRTHAGKKPYECNECEKTFINKLNLGIHKRTHTGERPYECNECGKTFRQKSNLSTHQGTHTGEKPYVCNECGKTFHRKSFLTIHQRTHTGKNRMDVMNVEKLFVRNHTLLYIRELTPGKSPMNVMNVENPFIRRQIFRSIKVFTRGRNPMNVANVEKPCQKSVLTVHHRTHTGEKPYECNECGKTFCHKSNLSTHQGTHSGEKPYECDECRKTFYDKTVLTIHQRTHTGEKPFECKECRKTFSQKSKLFVHHRTHTGEKPFRCNECRKTFSQKSGLSIHQRTHTGEKPYECKECGKTFCQKSHLSRHQQTHIGEKSDVAEAGYVFPQNHSFFP.

Residues Val22–Ala93 enclose the KRAB domain. Residues Phe209–His231 form a C2H2-type 1; degenerate zinc finger. Residues Arg266–His277 form a C2H2-type 2; degenerate zinc finger. A C2H2-type 3; degenerate zinc finger spans residues Tyr283 to Pro305. 12 C2H2-type zinc fingers span residues Tyr311–His333, Tyr339–His361, Tyr367–His389, Tyr395–His417, Tyr423–His445, Tyr451–His473, Tyr479–His501, Tyr507–His529, Tyr535–His557, Tyr563–His585, Tyr591–His613, and Tyr619–His641. The C2H2-type 16; degenerate zinc-finger motif lies at Cys649–His669. A C2H2-type 17; degenerate zinc finger spans residues Gln741–His752. 5 C2H2-type zinc fingers span residues Tyr758–His780, Tyr786–His808, Phe814–His836, Phe842–His864, and Tyr870–His892.

Belongs to the krueppel C2H2-type zinc-finger protein family.

Its subcellular location is the nucleus. Functionally, may be involved in transcriptional regulation. The polypeptide is Zinc finger protein 717 (Homo sapiens (Human)).